The following is a 275-amino-acid chain: uncharacterized protein (275 aa).

[4Fe-4S] cluster is bound by residues cysteine 97, cysteine 102, cysteine 136, and cysteine 140. Cysteine 140 is a binding site for siroheme.

The protein belongs to the nitrite and sulfite reductase 4Fe-4S domain family.

This is an uncharacterized protein from Methanocaldococcus jannaschii (strain ATCC 43067 / DSM 2661 / JAL-1 / JCM 10045 / NBRC 100440) (Methanococcus jannaschii).